Reading from the N-terminus, the 678-residue chain is Pescadillo homolog (678 aa).

The disordered stretch occupies residues 265 to 289 (PQQQTKTNNTTKKSKSTTAAAAATT). Positions 269-289 (TKTNNTTKKSKSTTAAAAATT) are enriched in low complexity. Residues 352-442 (DVTTLFKGFH…LLLPYSEYTI (91 aa)) enclose the BRCT domain. Disordered regions lie at residues 485–601 (TNAE…EDTK) and 626–678 (ATAN…KQKK). The span at 505 to 518 (SDGESDDEDDEDLE) shows a compositional bias: acidic residues. Over residues 519–531 (HLETRYTEELRKE) the composition is skewed to basic and acidic residues. The span at 541–574 (VDDDDEEEEDGEEDGEEEEEEEDGEEESESESES) shows a compositional bias: acidic residues. The stretch at 581 to 640 (VLTKKQRDELNKQKQAEEDTKLAELMIRKKDKWIYNKVKETNQQRATANQTLLEKRNKVE) forms a coiled coil. Basic and acidic residues-rich tracts occupy residues 585-601 (KQRD…EDTK) and 633-643 (LEKRNKVESGK). The segment covering 649 to 678 (VKVAPQPKKPAPLVKKSQQKQQQASKKQKK) has biased composition (low complexity).

Belongs to the pescadillo family.

The protein resides in the nucleus. Its subcellular location is the nucleolus. It localises to the nucleoplasm. Required for maturation of ribosomal RNAs and formation of the large ribosomal subunit. This chain is Pescadillo homolog, found in Dictyostelium discoideum (Social amoeba).